Reading from the N-terminus, the 378-residue chain is N-acetyldiaminopimelate deacetylase (378 aa).

D72 is an active-site residue. The active-site Proton acceptor is E131.

Belongs to the peptidase M20A family. N-acetyldiaminopimelate deacetylase subfamily.

It carries out the reaction N-acetyl-(2S,6S)-2,6-diaminopimelate + H2O = (2S,6S)-2,6-diaminopimelate + acetate. Its pathway is amino-acid biosynthesis; L-lysine biosynthesis via DAP pathway; LL-2,6-diaminopimelate from (S)-tetrahydrodipicolinate (acetylase route): step 3/3. Its function is as follows. Catalyzes the conversion of N-acetyl-diaminopimelate to diaminopimelate and acetate. This Enterococcus faecalis (strain ATCC 700802 / V583) protein is N-acetyldiaminopimelate deacetylase.